Consider the following 662-residue polypeptide: 72 kDa type IV collagenase (662 aa).

Residues 1 to 29 (MEARLVWGVLVGPLRVLCVLCCLLGHAIA) form the signal peptide. The propeptide at 30 to 109 (APSPIIKFPG…PRCGNPDVAN (80 aa)) is activation peptide. The Cysteine switch signature appears at 100–107 (PRCGNPDV). A Zn(2+)-binding site is contributed by cysteine 102. Residues 110-221 (YNFFPRKPKW…LWTLGEGQVV (112 aa)) form a collagenase-like 1 region. Positions 134 and 168 each coordinate Ca(2+). The Zn(2+) site is built by histidine 178 and aspartate 180. Positions 185 and 186 each coordinate Ca(2+). Residue histidine 193 coordinates Zn(2+). Ca(2+)-binding residues include glycine 200, glycine 202, and aspartate 204. Histidine 206 is a Zn(2+) binding site. The Ca(2+) site is built by aspartate 208, aspartate 209, and glutamate 211. The segment at 222-396 (RVKYGNADGE…WGFCPDQGYS (175 aa)) is collagen-binding. Fibronectin type-II domains follow at residues 228 to 276 (ADGE…FCPH), 286 to 334 (GDGQ…FCPE), and 344 to 392 (SEGA…FCPD). 6 cysteine pairs are disulfide-bonded: cysteine 233–cysteine 259, cysteine 247–cysteine 274, cysteine 291–cysteine 317, cysteine 305–cysteine 332, cysteine 349–cysteine 375, and cysteine 363–cysteine 390. Residues 397-467 (LFLVAAHEFG…GPTPTLGPVT (71 aa)) are collagenase-like 2. Histidine 403 lines the Zn(2+) pocket. Glutamate 404 is an active-site residue. Positions 407 and 413 each coordinate Zn(2+). A required for inhibitor TIMP2 binding region spans residues 414–662 (SQDPGALMAP…GSIKSDWLGC (249 aa)). Residues cysteine 471 and cysteine 662 are joined by a disulfide bond. Hemopexin repeat units follow at residues 474–518 (DIVF…WPEL), 519–565 (PEKI…GLPP), 567–615 (VQQV…WNAI), and 616–662 (PDNL…WLGC). Ca(2+)-binding residues include aspartate 478, aspartate 523, and aspartate 571. The N-linked (GlcNAc...) asparagine glycan is linked to asparagine 575. Aspartate 620 lines the Ca(2+) pocket. N-linked (GlcNAc...) asparagine glycosylation occurs at asparagine 644.

It belongs to the peptidase M10A family. As to quaternary structure, interacts (via the C-terminal hemopexin-like domains-containing region) with the integrin alpha-V/beta-3; the interaction promotes vascular invasion in angiogenic vessels and melamoma cells. Interacts (via the C-terminal PEX domain) with TIMP2 (via the C-terminal); the interaction inhibits the degradation activity. Interacts with GSK3B. Ca(2+) is required as a cofactor. Zn(2+) serves as cofactor. In terms of processing, phosphorylation on multiple sites modulates enzymatic activity. Phosphorylated by PKC in vitro. Post-translationally, the propeptide is processed by MMP14 (MT-MMP1) and MMP16 (MT-MMP3). Autocatalytic cleavage in the C-terminal produces the anti-angiogenic peptide, PEX. This processing appears to be facilitated by binding integrin integrinv/beta3.

The protein localises to the secreted. It is found in the extracellular space. The protein resides in the extracellular matrix. Its subcellular location is the membrane. It localises to the nucleus. It carries out the reaction Cleavage of gelatin type I and collagen types IV, V, VII, X. Cleaves the collagen-like sequence Pro-Gln-Gly-|-Ile-Ala-Gly-Gln.. In terms of biological role, ubiquitinous metalloproteinase that is involved in diverse functions such as remodeling of the vasculature, angiogenesis, tissue repair, tumor invasion, inflammation, and atherosclerotic plaque rupture. As well as degrading extracellular matrix proteins, can also act on several nonmatrix proteins such as big endothelial 1 and beta-type CGRP promoting vasoconstriction. Also cleaves KISS at a Gly-|-Leu bond. Appears to have a role in myocardial cell death pathways. Contributes to myocardial oxidative stress by regulating the activity of GSK3beta. Cleaves GSK3beta in vitro. Involved in the formation of the fibrovascular tissues. PEX, the C-terminal non-catalytic fragment of MMP2, possesses anti-angiogenic and anti-tumor properties and inhibits cell migration and cell adhesion to FGF2 and vitronectin. Ligand for integrin alpha-v/beta3 on the surface of blood vessels. This is 72 kDa type IV collagenase (Mmp2) from Rattus norvegicus (Rat).